The primary structure comprises 179 residues: MINKNDSVLNNQFWQSYNHQGFMVTQFSDLINYISNWARSNSLWPMTFGLACCAVEMMHTAASRYDLDRYGVMFRASPRQADVMIVAGTLTNKMAPALRKVYDQMTEPRYVISMGSCANGGGYYHYSYSVVRGCDRIVPVDIYVPGCPPTAEALLYGIFCLQQKINRGNTSITRKSTQD.

[4Fe-4S] cluster is bound by residues Cys-52, Cys-53, Cys-117, and Cys-147.

Belongs to the complex I 20 kDa subunit family. In terms of assembly, NDH-1 is composed of 14 different subunits. Subunits NuoB, C, D, E, F, and G constitute the peripheral sector of the complex. [4Fe-4S] cluster is required as a cofactor.

It is found in the cell inner membrane. The catalysed reaction is a quinone + NADH + 5 H(+)(in) = a quinol + NAD(+) + 4 H(+)(out). Its function is as follows. NDH-1 shuttles electrons from NADH, via FMN and iron-sulfur (Fe-S) centers, to quinones in the respiratory chain. The immediate electron acceptor for the enzyme in this species is believed to be ubiquinone. Couples the redox reaction to proton translocation (for every two electrons transferred, four hydrogen ions are translocated across the cytoplasmic membrane), and thus conserves the redox energy in a proton gradient. This chain is NADH-quinone oxidoreductase subunit B, found in Ehrlichia chaffeensis (strain ATCC CRL-10679 / Arkansas).